We begin with the raw amino-acid sequence, 80 residues long: Exodeoxyribonuclease 7 small subunit (80 aa).

This sequence belongs to the XseB family. Heterooligomer composed of large and small subunits.

Its subcellular location is the cytoplasm. It carries out the reaction Exonucleolytic cleavage in either 5'- to 3'- or 3'- to 5'-direction to yield nucleoside 5'-phosphates.. In terms of biological role, bidirectionally degrades single-stranded DNA into large acid-insoluble oligonucleotides, which are then degraded further into small acid-soluble oligonucleotides. This Rickettsia conorii (strain ATCC VR-613 / Malish 7) protein is Exodeoxyribonuclease 7 small subunit.